Reading from the N-terminus, the 483-residue chain is ATP-dependent RNA helicase dbp-5 (483 aa).

The segment at 1-47 is disordered; sequence MADLASRITKPDEAPAAAPEAAPVSAPASEEPKAPENETSIEESQSN. The span at 14 to 29 shows a compositional bias: low complexity; sequence APAAAPEAAPVSAPAS. A Q motif motif is present at residues 74–102; it reads SSFDELGLPEAVNRGLLAINFKKPSKVQE. The Helicase ATP-binding domain occupies 107–276; sequence LMLSDPPRNM…ERFAPNANQM (170 aa). Residue 120–127 coordinates ATP; that stretch reads SQSGTGKT. The DEAD box signature appears at 223–226; sequence DEAD. In terms of domain architecture, Helicase C-terminal spans 304–455; the sequence is ILCKLYGLMT…LIQLNPNDLD (152 aa).

This sequence belongs to the DEAD box helicase family. DDX19/DBP5 subfamily. In terms of assembly, associates with the nuclear pore complex.

The protein localises to the cytoplasm. It localises to the nucleus. The protein resides in the nuclear pore complex. Its subcellular location is the nucleus membrane. It catalyses the reaction ATP + H2O = ADP + phosphate + H(+). Its function is as follows. ATP-dependent RNA helicase associated with the nuclear pore complex and essential for mRNA export from the nucleus. May participate in a terminal step of mRNA export through the removal of proteins that accompany mRNA through the nucleopore complex. May also be involved in early transcription. This Neurospora crassa (strain ATCC 24698 / 74-OR23-1A / CBS 708.71 / DSM 1257 / FGSC 987) protein is ATP-dependent RNA helicase dbp-5 (dbp-5).